A 428-amino-acid chain; its full sequence is Putative zinc metalloprotease SA1105 (428 aa).

Position 21 (His21) interacts with Zn(2+). Glu22 is a catalytic residue. His25 is a binding site for Zn(2+). Transmembrane regions (helical) follow at residues 172–194, 309–331, 352–374, and 401–420; these read FLTLFAGPLFNFILALVLFIGLA, GSTLIFTAVVGMLASIFTGGFSF, IISLIGYTALLSVNLGIMNLIPI, and TTIIAIGAIFMVVIMILVTW. Residues 186-269 enclose the PDZ domain; it reads ALVLFIGLAY…TKSVELTPKK (84 aa).

The protein belongs to the peptidase M50B family. Zn(2+) serves as cofactor.

The protein resides in the cell membrane. The sequence is that of Putative zinc metalloprotease SA1105 from Staphylococcus aureus (strain N315).